The primary structure comprises 588 residues: Aspartate--tRNA ligase (588 aa).

Residue glutamate 177 coordinates L-aspartate. The aspartate stretch occupies residues 201–204 (QLFK). Arginine 223 provides a ligand contact to L-aspartate. ATP-binding positions include 223 to 225 (RDE) and glutamine 232. Histidine 451 is an L-aspartate binding site. Glutamate 485 is an ATP binding site. Arginine 492 serves as a coordination point for L-aspartate. 537 to 540 (GLDR) contacts ATP.

Belongs to the class-II aminoacyl-tRNA synthetase family. Type 1 subfamily. Homodimer.

The protein localises to the cytoplasm. It carries out the reaction tRNA(Asp) + L-aspartate + ATP = L-aspartyl-tRNA(Asp) + AMP + diphosphate. Its function is as follows. Catalyzes the attachment of L-aspartate to tRNA(Asp) in a two-step reaction: L-aspartate is first activated by ATP to form Asp-AMP and then transferred to the acceptor end of tRNA(Asp). The protein is Aspartate--tRNA ligase of Staphylococcus haemolyticus (strain JCSC1435).